Consider the following 314-residue polypeptide: MSRVPAFLSAAEVEEHLRSSSLLIPPLETALANFSSGPEGGVMQPVRTVVPVTKHRGYLGVMPAYSAAEDALTTKLVTFYEDRGITSVVPSHQATVLLFEPSNGTLLAVMDGNVITAKRTAAVSAIATKFLKPPSSEVLCILGAGVQAYSHYEIFTEQFSFKEVRIWNRTKENAEKFADTVQGEVRVCSSVQEAVAGADVIITVTLATEPILFGEWVKPGAHINAVGASRPDWRELDDELMKEAVLYVDSQEAALKESGDVLLSGAEIFAELGEVIKGVKPAHCEKTTVFKSLGMAVEDTVAAKLIYDSWSSGK.

Arg47 provides a ligand contact to 3,3',5-triiodo-L-thyronine. 14 residues coordinate NADPH: Asp82, His92, Arg119, Ala144, Val146, Gln147, Asn168, Arg169, Thr170, Asn173, Thr205, Leu206, Val226, and Ala228. Glu257 contacts 3,3',5-triiodo-L-thyronine. Residue Ser292 participates in NADPH binding.

It belongs to the ornithine cyclodeaminase/mu-crystallin family. As to quaternary structure, homodimer. Binds the thyroid hormone triiodothyronine (T3); T3 binding inhibits enzymatic activity. As to expression, expressed in neural tissues, muscle and kidney. Expressed in the inner ear.

The protein localises to the cytoplasm. It catalyses the reaction L-pipecolate + NADP(+) = Delta(1)-piperideine-2-carboxylate + NADPH + H(+). It carries out the reaction L-pipecolate + NAD(+) = Delta(1)-piperideine-2-carboxylate + NADH + H(+). The enzyme catalyses L-proline + NADP(+) = 1-pyrroline-2-carboxylate + NADPH + H(+). The catalysed reaction is L-proline + NAD(+) = 1-pyrroline-2-carboxylate + NADH + H(+). It catalyses the reaction (3R)-1,4-thiomorpholine-3-carboxylate + NAD(+) = 3,4-dehydrothiomorpholine-3-carboxylate + NADH + 2 H(+). It carries out the reaction (3R)-1,4-thiomorpholine-3-carboxylate + NADP(+) = 3,4-dehydrothiomorpholine-3-carboxylate + NADPH + 2 H(+). The enzyme catalyses (S)-cystathionine ketimine + NADH + 2 H(+) = (3R,5S)-2,3,5,6,7-pentahydro-1,4-thiazepine-3,5-dicarboxylate + NAD(+). The catalysed reaction is (S)-cystathionine ketimine + NADPH + 2 H(+) = (3R,5S)-2,3,5,6,7-pentahydro-1,4-thiazepine-3,5-dicarboxylate + NADP(+). It catalyses the reaction (R)-lanthionine ketimine + NADPH + 2 H(+) = (3R,5R)-1,4-thiomorpholine-3,5-dicarboxylate + NADP(+). It carries out the reaction Delta(2)-thiazoline-2-carboxylate + NADPH + 2 H(+) = L-thiazolidine-2-carboxylate + NADP(+). With respect to regulation, inhibited by thyroid hormones triiodothyronine (T3) and thyroxine (T4). Its function is as follows. Catalyzes the NAD(P)H-dependent reduction of imine double bonds of a number of cyclic ketimine substrates, including sulfur-containing cyclic ketimines. Under physiological conditions, it efficiently catalyzes delta(1)-piperideine-2-carboxylate (P2C) and delta(1)-pyrroline-2-carboxylate (Pyr2C) reduction, suggesting a central role in lysine and glutamate metabolism. Additional substrates are delta(2)-thiazoline-2-carboxylate (T2C), 3,4-dehydrothiomorpholine-3-carboxylate (AECK), and (R)-lanthionine ketimine (LK) that is reduced at very low rate compared to other substrates. Also catalyzes the NAD(P)H-dependent reduction of (S)-cystathionine ketimine (CysK). This is Ketimine reductase mu-crystallin from Homo sapiens (Human).